The chain runs to 91 residues: uncharacterized protein (91 aa).

Positions 1–91 constitute an Integrase catalytic domain; it reads MLTFWHWKWL…YQNILRENGI (91 aa).

This is an uncharacterized protein from Haemophilus influenzae (strain ATCC 51907 / DSM 11121 / KW20 / Rd).